We begin with the raw amino-acid sequence, 398 residues long: Phosphoglycerate kinase (398 aa).

Substrate-binding positions include 21 to 23 (DFN), arginine 36, 59 to 62 (HLGR), arginine 119, and arginine 157. ATP contacts are provided by residues lysine 208, glycine 296, glutamate 327, and 354–357 (GGDS).

It belongs to the phosphoglycerate kinase family. In terms of assembly, monomer.

The protein localises to the cytoplasm. The enzyme catalyses (2R)-3-phosphoglycerate + ATP = (2R)-3-phospho-glyceroyl phosphate + ADP. The protein operates within carbohydrate degradation; glycolysis; pyruvate from D-glyceraldehyde 3-phosphate: step 2/5. The sequence is that of Phosphoglycerate kinase from Streptococcus mutans serotype c (strain ATCC 700610 / UA159).